A 297-amino-acid polypeptide reads, in one-letter code: 4-hydroxy-tetrahydrodipicolinate synthase (297 aa).

Position 55 (Thr55) interacts with pyruvate. Tyr144 functions as the Proton donor/acceptor in the catalytic mechanism. Lys172 serves as the catalytic Schiff-base intermediate with substrate. Ile213 serves as a coordination point for pyruvate.

The protein belongs to the DapA family. As to quaternary structure, homotetramer; dimer of dimers.

Its subcellular location is the cytoplasm. It carries out the reaction L-aspartate 4-semialdehyde + pyruvate = (2S,4S)-4-hydroxy-2,3,4,5-tetrahydrodipicolinate + H2O + H(+). It participates in amino-acid biosynthesis; L-lysine biosynthesis via DAP pathway; (S)-tetrahydrodipicolinate from L-aspartate: step 3/4. In terms of biological role, catalyzes the condensation of (S)-aspartate-beta-semialdehyde [(S)-ASA] and pyruvate to 4-hydroxy-tetrahydrodipicolinate (HTPA). The polypeptide is 4-hydroxy-tetrahydrodipicolinate synthase (Lactococcus lactis subsp. cremoris (strain MG1363)).